Reading from the N-terminus, the 467-residue chain is 3-isopropylmalate dehydratase large subunit (467 aa).

3 residues coordinate [4Fe-4S] cluster: Cys-349, Cys-409, and Cys-412.

Belongs to the aconitase/IPM isomerase family. LeuC type 1 subfamily. In terms of assembly, heterodimer of LeuC and LeuD. [4Fe-4S] cluster serves as cofactor.

It carries out the reaction (2R,3S)-3-isopropylmalate = (2S)-2-isopropylmalate. It participates in amino-acid biosynthesis; L-leucine biosynthesis; L-leucine from 3-methyl-2-oxobutanoate: step 2/4. Catalyzes the isomerization between 2-isopropylmalate and 3-isopropylmalate, via the formation of 2-isopropylmaleate. This Ruegeria sp. (strain TM1040) (Silicibacter sp.) protein is 3-isopropylmalate dehydratase large subunit.